Consider the following 1132-residue polypeptide: Ubiquitin carboxyl-terminal hydrolase 43 (1132 aa).

Residues 1–103 (MDPGVGNALG…GARPPGAQGL (103 aa)) form a disordered region. Positions 17 to 28 (RPRRRRSLRRLL) are enriched in basic residues. Low complexity-rich tracts occupy residues 29–44 (NRFL…SGDS) and 63–78 (FACA…GSPG). In terms of domain architecture, USP spans 101-710 (QGLKNHGNTC…GAYILFYQKR (610 aa)). C110 (nucleophile) is an active-site residue. Residue H668 is the Proton acceptor of the active site. R746 carries the asymmetric dimethylarginine modification. 4 disordered regions span residues 839-891 (RRRP…TGVP), 935-1008 (TVMP…RGQG), 1024-1044 (RTVR…SDRL), and 1057-1106 (RESP…GEQI). The span at 941–950 (GDEKPARPEG) shows a compositional bias: basic and acidic residues. The segment covering 958–967 (GSSQVGSQSS) has biased composition (low complexity). Phosphoserine is present on S970. Over residues 994–1006 (AAMEERAPDKDRG) the composition is skewed to basic and acidic residues.

This sequence belongs to the peptidase C19 family.

The catalysed reaction is Thiol-dependent hydrolysis of ester, thioester, amide, peptide and isopeptide bonds formed by the C-terminal Gly of ubiquitin (a 76-residue protein attached to proteins as an intracellular targeting signal).. May recognize and hydrolyze the peptide bond at the C-terminal Gly of ubiquitin. Involved in the processing of poly-ubiquitin precursors as well as that of ubiquitinated proteins. This chain is Ubiquitin carboxyl-terminal hydrolase 43 (Usp43), found in Mus musculus (Mouse).